The sequence spans 142 residues: Small ribosomal subunit protein uS9 (142 aa).

Belongs to the universal ribosomal protein uS9 family.

The sequence is that of Small ribosomal subunit protein uS9 (RPS16) from Debaryomyces hansenii (strain ATCC 36239 / CBS 767 / BCRC 21394 / JCM 1990 / NBRC 0083 / IGC 2968) (Yeast).